We begin with the raw amino-acid sequence, 481 residues long: 2-succinylbenzoate--CoA ligase (481 aa).

This sequence belongs to the ATP-dependent AMP-binding enzyme family. MenE subfamily.

The catalysed reaction is 2-succinylbenzoate + ATP + CoA = 2-succinylbenzoyl-CoA + AMP + diphosphate. Its pathway is quinol/quinone metabolism; 1,4-dihydroxy-2-naphthoate biosynthesis; 1,4-dihydroxy-2-naphthoate from chorismate: step 5/7. It functions in the pathway quinol/quinone metabolism; menaquinone biosynthesis. Converts 2-succinylbenzoate (OSB) to 2-succinylbenzoyl-CoA (OSB-CoA). This chain is 2-succinylbenzoate--CoA ligase, found in Bacillus cereus (strain Q1).